Consider the following 318-residue polypeptide: Ribosome biogenesis protein RLP7 (318 aa).

2 disordered regions span residues 1 to 49 (MSQP…NRFV) and 101 to 121 (AGSK…DEED). The span at 19-40 (ADRTRLEKQELAKKRKEQEEKQ) shows a compositional bias: basic and acidic residues. The segment covering 110 to 121 (ELQDVDEEDEED) has biased composition (acidic residues).

Belongs to the universal ribosomal protein uL30 family.

The protein localises to the nucleus. It is found in the nucleolus. Its function is as follows. Involved in the biogenesis of the 60S ribosomal subunit. May act as a specificity factor that binds precursor rRNAs and tethers the enzymes that carry out the early 5' to 3' exonucleolytic reactions that generate the mature rRNAs. The polypeptide is Ribosome biogenesis protein RLP7 (RLP7) (Kluyveromyces lactis (strain ATCC 8585 / CBS 2359 / DSM 70799 / NBRC 1267 / NRRL Y-1140 / WM37) (Yeast)).